The primary structure comprises 387 residues: MSSKVYSTGSRAKDHQPSGPECLPLPEANAEAIDFLSSLHKEELQMLFFSETLAMVSDTGEPQGELTIEVQRGKYQEKLGMLTYCLFVHASSRGFLDKMLCGNSLLGYLSEKLELMEQHSQDFIKFLILPMERKMSLLKQDDQLAVTRSIKEGEEVKTGVTSFPWSSIKGFISEAANLVLLRVMAWRRMVPSNARFLTLDTEGKLCYLTYQNLGFQTIQVDHQQAEVFIVEQTVHAEEGIPMSCQYYLLSDGHLAKRIQVGSPGCCIITKMPILREEDEIEPRPVFEKKPLVWEEDMELYSKFLDRKEELRLGHASYLRQHPEAHALISDFLLFLLLRQPEDVVTFAAEFFGPFDPWRPSSPALGSSHRPNPFRSLEPEGDARSGAA.

Positions 1–10 are enriched in polar residues; that stretch reads MSSKVYSTGS. 2 disordered regions span residues 1–21 and 361–387; these read MSSK…SGPE and SPAL…SGAA. The segment covering 376-387 has biased composition (basic and acidic residues); the sequence is LEPEGDARSGAA.

The protein belongs to the CATIP family. In terms of assembly, interacts with TTC17. Strongly expressed in round and elongating spermatids, weakly in pachytene spermatocytes. Expressed in Leydig cells (at protein level). Expressed in testis, placenta, prostate and lung, and moderately in ovary and brain.

The protein localises to the nucleus. Its subcellular location is the cytoplasm. It localises to the cell membrane. It is found in the cytoskeleton. In terms of biological role, plays a role in primary ciliogenesis by modulating actin polymerization. This chain is Ciliogenesis-associated TTC17-interacting protein (CATIP), found in Homo sapiens (Human).